Here is a 132-residue protein sequence, read N- to C-terminus: MSMTDPLGDLLTRIRNGQRANKSTVVSPASSLRANVLEVLKREGYIRGYARSELRPGVAQLSIELKYHEGQPVIREISRVSTPGRRVYSKIADLRRVANGLGITILSTPRGVMSDTEARTQNVGGEVLCEVF.

This sequence belongs to the universal ribosomal protein uS8 family. Part of the 30S ribosomal subunit. Contacts proteins S5 and S12.

Functionally, one of the primary rRNA binding proteins, it binds directly to 16S rRNA central domain where it helps coordinate assembly of the platform of the 30S subunit. The protein is Small ribosomal subunit protein uS8 of Paramagnetospirillum magneticum (strain ATCC 700264 / AMB-1) (Magnetospirillum magneticum).